A 367-amino-acid chain; its full sequence is Secondary metabolism regulator laeA (367 aa).

Residues 1–82 (MFGQQQQQQP…PETYPGHEEN (82 aa)) are disordered. The segment covering 19 to 41 (LNHNSRWTPPNESAQPRRSSNAM) has biased composition (polar residues). Composition is skewed to basic and acidic residues over residues 47-56 (TDRDPAEGHP) and 71-82 (KSPETYPGHEEN).

This sequence belongs to the methyltransferase superfamily. LaeA methyltransferase family. In terms of assembly, component of the heterotrimeric velvet complex composed of laeA, veA and velB; VeA acting as a bridging protein between laeA and velB.

The protein localises to the nucleus. The enzyme catalyses L-methionyl-[protein] + S-adenosyl-L-methionine = S-methyl-L-methionyl-[protein] + S-adenosyl-L-homocysteine. In terms of biological role, methyltransferase that performs automethylation. No other methyl-accepting substrate has been identified yet. Component of the velvet transcription factor complex that acts as a global regulator for secondary metabolite gene expression. Controls the expression of the monacolin K gene clusters. Also regulates pigmentation. This Monascus pilosus (Red mold) protein is Secondary metabolism regulator laeA.